Consider the following 23-residue polypeptide: Basic phospholipase A2 homolog (23 aa).

In terms of processing, contains 7 disulfide bonds. Expressed by the venom gland.

The protein resides in the secreted. The chain is Basic phospholipase A2 homolog from Trimeresurus stejnegeri (Chinese green tree viper).